The primary structure comprises 326 residues: Polycomb complex protein BMI-1 (326 aa).

The RING-type zinc finger occupies 18–57 (CVLCGGYFIDATTIIECLHSFCKTCIVRYLETSKYCPICD). Positions 81-95 (KLVPGLFKNEMKRRR) match the Nuclear localization signal motif. The interval 162–182 (RYLRCPAAMTVMHLRKFLRSK) is interaction with PHC2. The interaction with E4F1 stretch occupies residues 164–228 (LRCPAAMTVM…GPLPLKYRVR (65 aa)). The disordered stretch occupies residues 236–326 (ISHQRDGLTN…VNGSSATSSG (91 aa)). A compositionally biased stretch (low complexity) spans 266 to 278 (PSTSSCLPSPSTP). Positions 279–309 (VQSPHPQFPHISSTMNGTSNSPSGNHQSSFA) are enriched in polar residues. Low complexity predominate over residues 315–326 (SSVNGSSATSSG).

Component of a PRC1-like complex. Identified in a PRC1-like HPRC-H complex with CBX2, CBX4, CBX8, PHC1, PHC2, PHC3 RING1 and RNF2. Interacts with RNF2/RING2. Interacts with RING1. Part of a complex that contains RNF2, UB2D3 and BMI1, where RNF2 and BMI1 form a tight heterodimer, and UB2D3 interacts only with RNF2. The complex composed of RNF2, UB2D3 and BMI1 binds nucleosomes, and has activity only with nucleosomal histone H2A. Interacts with CBX7 and CBX8. Interacts with SPOP. Part of a complex consisting of BMI1, CUL3 and SPOP. Interacts with E4F1. Interacts with PHC2. Interacts with zinc finger protein ZNF277. May be part of a complex including at least ZNF277, BMI1 and RNF2/RING2. Monoubiquitinated. May be polyubiquitinated; which does not lead to proteasomal degradation.

Its subcellular location is the nucleus. The protein localises to the cytoplasm. Functionally, component of a Polycomb group (PcG) multiprotein PRC1-like complex, a complex class required to maintain the transcriptionally repressive state of many genes, including Hox genes, throughout development. PcG PRC1 complex acts via chromatin remodeling and modification of histones; it mediates monoubiquitination of histone H2A 'Lys-119', rendering chromatin heritably changed in its expressibility. The complex composed of RNF2, UB2D3 and BMI1 binds nucleosomes, and has activity only with nucleosomal histone H2A. In the PRC1-like complex, regulates the E3 ubiquitin-protein ligase activity of RNF2/RING2. The protein is Polycomb complex protein BMI-1 (BMI1) of Homo sapiens (Human).